A 685-amino-acid chain; its full sequence is MIKLIRFFRSRRCWVISLQARCFSAPSRTHFDFSGESSDTERALVSALGSCASSNDVTCGRQIHCRVLKSGLDSNGYICNSVLNMYAKCRLLADAESVFRDHAKLDSASFNIMVDGYVRSRRLWDALKLFDVMPERSCVSYTTLIKGYAQNNQWSEAMELFREMRNLGIMLNEVTLATVISACSHLGGIWDCRMLQSLAIKLKLEGRVFVSTNLLHMYCLCLCLKDARKLFDEMPERNLVTWNVMLNGYSKAGLIEQAEELFDQITEKDIVSWGTMIDGCLRKNQLDEALVYYTEMLRCGMKPSEVMMVDLLSASARSVGSSKGLQLHGTIVKRGFDCYDFLQATIIHFYAVSNDIKLALQQFEASVKDHIASRNALIAGFVKNGMVEQAREVFDQTHDKDIFSWNAMISGYAQSLSPQLALHLFREMISSSQVKPDAITMVSVFSAISSLGSLEEGKRAHDYLNFSTIPPNDNLTAAIIDMYAKCGSIETALNIFHQTKNISSSTISPWNAIICGSATHGHAKLALDLYSDLQSLPIKPNSITFVGVLSACCHAGLVELGKTYFESMKSDHGIEPDIKHYGCMVDLLGKAGRLEEAKEMIKKMPVKADVMIWGMLLSASRTHGNVEIAELAATELAAIDPSHGGCKVMLSNVYADAGRWEDVALVREEMRTRDVEWSRAFSGVV.

The N-terminal 23 residues, 1–23, are a transit peptide targeting the mitochondrion; sequence MIKLIRFFRSRRCWVISLQARCF. 17 PPR repeats span residues 40–74, 75–105, 106–136, 137–171, 172–206, 207–237, 238–268, 269–303, 304–338, 339–369, 370–400, 401–435, 437–471, 472–502, 506–540, 541–576, and 577–607; these read TERALVSALGSCASSNDVTCGRQIHCRVLKSGLDS, NGYICNSVLNMYAKCRLLADAESVFRDHAKL, DSASFNIMVDGYVRSRRLWDALKLFDVMPER, SCVSYTTLIKGYAQNNQWSEAMELFREMRNLGIML, NEVTLATVISACSHLGGIWDCRMLQSLAIKLKLEG, RVFVSTNLLHMYCLCLCLKDARKLFDEMPER, NLVTWNVMLNGYSKAGLIEQAEELFDQITEK, DIVSWGTMIDGCLRKNQLDEALVYYTEMLRCGMKP, SEVMMVDLLSASARSVGSSKGLQLHGTIVKRGFDC, YDFLQATIIHFYAVSNDIKLALQQFEASVKD, HIASRNALIAGFVKNGMVEQAREVFDQTHDK, DIFSWNAMISGYAQSLSPQLALHLFREMISSSQVK, DAITMVSVFSAISSLGSLEEGKRAHDYLNFSTIPP, NDNLTAAIIDMYAKCGSIETALNIFHQTKNI, TISPWNAIICGSATHGHAKLALDLYSDLQSLPIKP, NSITFVGVLSACCHAGLVELGKTYFESMKSDHGIEP, and DIKHYGCMVDLLGKAGRLEEAKEMIKKMPVK. The interval 612–685 is type E motif; degenerate; it reads IWGMLLSASR…EWSRAFSGVV (74 aa).

Belongs to the PPR family. PCMP-E subfamily.

It localises to the mitochondrion. The protein is Pentatricopeptide repeat-containing protein At5g19020, mitochondrial (PCMP-E42) of Arabidopsis thaliana (Mouse-ear cress).